The primary structure comprises 104 residues: Pyrimidine/purine nucleoside phosphorylase (104 aa).

The protein belongs to the nucleoside phosphorylase PpnP family.

It carries out the reaction a purine D-ribonucleoside + phosphate = a purine nucleobase + alpha-D-ribose 1-phosphate. The enzyme catalyses adenosine + phosphate = alpha-D-ribose 1-phosphate + adenine. The catalysed reaction is cytidine + phosphate = cytosine + alpha-D-ribose 1-phosphate. It catalyses the reaction guanosine + phosphate = alpha-D-ribose 1-phosphate + guanine. It carries out the reaction inosine + phosphate = alpha-D-ribose 1-phosphate + hypoxanthine. The enzyme catalyses thymidine + phosphate = 2-deoxy-alpha-D-ribose 1-phosphate + thymine. The catalysed reaction is uridine + phosphate = alpha-D-ribose 1-phosphate + uracil. It catalyses the reaction xanthosine + phosphate = alpha-D-ribose 1-phosphate + xanthine. In terms of biological role, catalyzes the phosphorolysis of diverse nucleosides, yielding D-ribose 1-phosphate and the respective free bases. Can use uridine, adenosine, guanosine, cytidine, thymidine, inosine and xanthosine as substrates. Also catalyzes the reverse reactions. In Thiobacillus denitrificans (strain ATCC 25259 / T1), this protein is Pyrimidine/purine nucleoside phosphorylase.